The following is a 509-amino-acid chain: ATP synthase subunit alpha (509 aa).

ATP is bound at residue Gly169 to Thr176.

Belongs to the ATPase alpha/beta chains family. In terms of assembly, F-type ATPases have 2 components, CF(1) - the catalytic core - and CF(0) - the membrane proton channel. CF(1) has five subunits: alpha(3), beta(3), gamma(1), delta(1), epsilon(1). CF(0) has three main subunits: a(1), b(2) and c(9-12). The alpha and beta chains form an alternating ring which encloses part of the gamma chain. CF(1) is attached to CF(0) by a central stalk formed by the gamma and epsilon chains, while a peripheral stalk is formed by the delta and b chains.

The protein resides in the cell inner membrane. The catalysed reaction is ATP + H2O + 4 H(+)(in) = ADP + phosphate + 5 H(+)(out). Functionally, produces ATP from ADP in the presence of a proton gradient across the membrane. The alpha chain is a regulatory subunit. This is ATP synthase subunit alpha from Brucella canis (strain ATCC 23365 / NCTC 10854 / RM-666).